A 398-amino-acid polypeptide reads, in one-letter code: Tyrosine--tRNA ligase (398 aa).

The short motif at 42 to 51 (PTAPDIHLGH) is the 'HIGH' region element. The 'KMSKS' region motif lies at 226–230 (KMSKS). Lys-229 contributes to the ATP binding site. In terms of domain architecture, S4 RNA-binding spans 336–397 (LAIANLLKDA…GKRKFAKVTL (62 aa)).

The protein belongs to the class-I aminoacyl-tRNA synthetase family. TyrS type 2 subfamily. As to quaternary structure, homodimer.

It is found in the cytoplasm. It catalyses the reaction tRNA(Tyr) + L-tyrosine + ATP = L-tyrosyl-tRNA(Tyr) + AMP + diphosphate + H(+). In terms of biological role, catalyzes the attachment of tyrosine to tRNA(Tyr) in a two-step reaction: tyrosine is first activated by ATP to form Tyr-AMP and then transferred to the acceptor end of tRNA(Tyr). The sequence is that of Tyrosine--tRNA ligase from Shewanella oneidensis (strain ATCC 700550 / JCM 31522 / CIP 106686 / LMG 19005 / NCIMB 14063 / MR-1).